Consider the following 421-residue polypeptide: Ribosomal RNA large subunit methyltransferase G (421 aa).

Residues 389-421 (EPELEQESDLNSKLDANTEVPHPQSALYGKPKA) form a disordered region.

This sequence belongs to the methyltransferase superfamily. RlmG family.

It localises to the cytoplasm. The enzyme catalyses guanosine(1835) in 23S rRNA + S-adenosyl-L-methionine = N(2)-methylguanosine(1835) in 23S rRNA + S-adenosyl-L-homocysteine + H(+). In terms of biological role, specifically methylates the guanine in position 1835 (m2G1835) of 23S rRNA. In Shewanella halifaxensis (strain HAW-EB4), this protein is Ribosomal RNA large subunit methyltransferase G.